Here is a 425-residue protein sequence, read N- to C-terminus: Enolase (425 aa).

Glutamine 163 is a binding site for (2R)-2-phosphoglycerate. Glutamate 205 (proton donor) is an active-site residue. Mg(2+)-binding residues include aspartate 242, glutamate 286, and aspartate 313. Residues lysine 338, arginine 367, serine 368, and lysine 389 each coordinate (2R)-2-phosphoglycerate. The active-site Proton acceptor is lysine 338.

The protein belongs to the enolase family. It depends on Mg(2+) as a cofactor.

It localises to the cytoplasm. The protein resides in the secreted. Its subcellular location is the cell surface. It catalyses the reaction (2R)-2-phosphoglycerate = phosphoenolpyruvate + H2O. It participates in carbohydrate degradation; glycolysis; pyruvate from D-glyceraldehyde 3-phosphate: step 4/5. Catalyzes the reversible conversion of 2-phosphoglycerate (2-PG) into phosphoenolpyruvate (PEP). It is essential for the degradation of carbohydrates via glycolysis. In Lactobacillus delbrueckii subsp. bulgaricus (strain ATCC 11842 / DSM 20081 / BCRC 10696 / JCM 1002 / NBRC 13953 / NCIMB 11778 / NCTC 12712 / WDCM 00102 / Lb 14), this protein is Enolase.